The primary structure comprises 679 residues: Methionine--tRNA ligase (679 aa).

Residues Pro12–His22 carry the 'HIGH' region motif. The Zn(2+) site is built by Cys143, Cys146, Cys156, and Cys158. Positions Lys328–Ser332 match the 'KMSKS' region motif. Lys331 provides a ligand contact to ATP. Residues Met537–Leu564 form a disordered region. The tRNA-binding domain occupies Asp577–His679.

It belongs to the class-I aminoacyl-tRNA synthetase family. MetG type 1 subfamily. In terms of assembly, homodimer. Zn(2+) is required as a cofactor.

Its subcellular location is the cytoplasm. The catalysed reaction is tRNA(Met) + L-methionine + ATP = L-methionyl-tRNA(Met) + AMP + diphosphate. Its function is as follows. Is required not only for elongation of protein synthesis but also for the initiation of all mRNA translation through initiator tRNA(fMet) aminoacylation. In Rhodopirellula baltica (strain DSM 10527 / NCIMB 13988 / SH1), this protein is Methionine--tRNA ligase.